Consider the following 271-residue polypeptide: DNA repair protein RecO (271 aa).

Positions 248–271 (AVGVEDSVRQDGDRDSTTRTPSSA) are disordered. The segment covering 253–264 (DSVRQDGDRDST) has biased composition (basic and acidic residues).

It belongs to the RecO family.

Functionally, involved in DNA repair and RecF pathway recombination. The protein is DNA repair protein RecO of Rhodococcus opacus (strain B4).